The primary structure comprises 273 residues: Large ribosomal subunit protein uL2 (273 aa).

The disordered stretch occupies residues 221–262; it reads RGTAMNPVDHPHGGGEGRNFGKHPVTPWGVQTKGKKTRHNKR. A compositionally biased stretch (basic residues) spans 253–262; that stretch reads KGKKTRHNKR.

The protein belongs to the universal ribosomal protein uL2 family. In terms of assembly, part of the 50S ribosomal subunit. Forms a bridge to the 30S subunit in the 70S ribosome.

One of the primary rRNA binding proteins. Required for association of the 30S and 50S subunits to form the 70S ribosome, for tRNA binding and peptide bond formation. It has been suggested to have peptidyltransferase activity; this is somewhat controversial. Makes several contacts with the 16S rRNA in the 70S ribosome. The polypeptide is Large ribosomal subunit protein uL2 (Aggregatibacter actinomycetemcomitans (Actinobacillus actinomycetemcomitans)).